We begin with the raw amino-acid sequence, 515 residues long: Dimethylnonatriene synthase (515 aa).

The helical transmembrane segment at 3–23 (FLFSTLQLSLFSLALVIFGYI) threads the bilayer. Substrate is bound at residue histidine 219. Residue lysine 252 forms a Glycyl lysine isopeptide (Lys-Gly) (interchain with G-Cter in ubiquitin) linkage. Cysteine 452 is a binding site for heme.

It belongs to the cytochrome P450 family. Requires heme as cofactor. As to expression, expressed in stems, flower peduncles, receptacle of developing and mature flowers and in stigma of mature opening flower buds.

Its subcellular location is the membrane. The enzyme catalyses (3S,6E)-nerolidol + reduced [NADPH--hemoprotein reductase] + O2 = (3E)-4,8-dimethylnona-1,3,7-triene + but-3-en-2-one + oxidized [NADPH--hemoprotein reductase] + 2 H2O + H(+). It carries out the reaction (6E,10E)-geranyllinalool + reduced [NADPH--hemoprotein reductase] + O2 = (3E,7E)-4,8,12-trimethyltrideca 1,3,7,11-tetraene + but-3-en-2-one + oxidized [NADPH--hemoprotein reductase] + 2 H2O + H(+). It functions in the pathway secondary metabolite biosynthesis; terpenoid biosynthesis. In terms of biological role, involved in the biosynthesis of homoterpenes, attractants of herbivores parasitoids and predators (e.g. predatory mites and parasitoid wasps). Catalyzes the conversion of the C20 (E,E)-geranyllinalool to C16-homoterpene 4,8,12-trimethyltrideca-1,3,7,11-tetraene (TMTT) of the C15 (E)-nerolidol to C11-homoterpene (E)-4,8-dimethyl-1,3,7-nonatriene (DMNT); these volatile compounds are produced upon insect herbivore attack and emitted from flowers and vegetative tissues during herbivore feeding. Required during resistance responses to the fungus Alternaria brassicae. Prevents oviposition of the phloem-feeding insect cabbage whitefly (Aleyrodes proletella). The protein is Dimethylnonatriene synthase of Arabidopsis thaliana (Mouse-ear cress).